The following is a 274-amino-acid chain: MQQLQNIIETAFERRAEITPANADTVTREAVNQVIALLDSGALRVAEKIDGQWVTHQWLKKAVLLSFRINDNQVIEGAESRYFDKVPMKFANYDEALFQKEGFRVVPPAAVRQGAFIARNTVLMPSYVNIGAYVDEGTMVDTWATVGSCAQIGKNVHLSGGVGIGGVLEPLQANPTIIEDNCFIGARSEVVEGVIVEEGSVISMGVYIGQSTRIYDRETGEIHYGRVPAGSVVVSGNLPSKDGKYSLYCAVIVKKVDAKTRGKVGINELLRTID.

Substrate contacts are provided by R104 and D141.

It belongs to the transferase hexapeptide repeat family. As to quaternary structure, homotrimer.

The protein localises to the cytoplasm. It catalyses the reaction (S)-2,3,4,5-tetrahydrodipicolinate + succinyl-CoA + H2O = (S)-2-succinylamino-6-oxoheptanedioate + CoA. The protein operates within amino-acid biosynthesis; L-lysine biosynthesis via DAP pathway; LL-2,6-diaminopimelate from (S)-tetrahydrodipicolinate (succinylase route): step 1/3. The sequence is that of 2,3,4,5-tetrahydropyridine-2,6-dicarboxylate N-succinyltransferase from Escherichia coli O6:H1 (strain CFT073 / ATCC 700928 / UPEC).